Reading from the N-terminus, the 734-residue chain is Threonine--tRNA ligase, cytoplasmic (734 aa).

The segment at 1-41 is disordered; sequence MSASEAGVTEQVKKLSVKDSSNDAVKPNKKENKKSKQQSLY. Basic and acidic residues predominate over residues 11–30; it reads QVKKLSVKDSSNDAVKPNKK. One can recognise a TGS domain in the interval 69–135; that stretch reads SMPRVPLKIV…EGEANEEIKL (67 aa). Phosphoserine occurs at positions 195 and 289. Threonine 297 and threonine 381 each carry phosphothreonine. A phosphoserine mark is found at serine 453 and serine 457. Threonine 460 carries the post-translational modification Phosphothreonine. Serine 605 is modified (phosphoserine).

This sequence belongs to the class-II aminoacyl-tRNA synthetase family.

It localises to the cytoplasm. The catalysed reaction is tRNA(Thr) + L-threonine + ATP = L-threonyl-tRNA(Thr) + AMP + diphosphate + H(+). The protein is Threonine--tRNA ligase, cytoplasmic (THS1) of Saccharomyces cerevisiae (strain ATCC 204508 / S288c) (Baker's yeast).